We begin with the raw amino-acid sequence, 404 residues long: Translation initiation factor eIF2B subunit gamma (404 aa).

This sequence belongs to the eIF-2B gamma/epsilon subunits family. As to quaternary structure, component of the translation initiation factor 2B (eIF2B) complex which is a heterodecamer of two sets of five different subunits: alpha, beta, gamma, delta and epsilon. Subunits alpha, beta and delta comprise a regulatory subcomplex and subunits epsilon and gamma comprise a catalytic subcomplex. Within the complex, the hexameric regulatory complex resides at the center, with the two heterodimeric catalytic subcomplexes bound on opposite sides.

Its subcellular location is the cytoplasm. It is found in the cytosol. Acts as a component of the translation initiation factor 2B (eIF2B) complex, which catalyzes the exchange of GDP for GTP on the eukaryotic initiation factor 2 (eIF2) complex gamma subunit. Its guanine nucleotide exchange factor activity is repressed when bound to eIF2 complex phosphorylated on the alpha subunit, thereby limiting the amount of methionyl-initiator methionine tRNA available to the ribosome and consequently global translation is repressed. The protein is Translation initiation factor eIF2B subunit gamma of Caenorhabditis elegans.